We begin with the raw amino-acid sequence, 439 residues long: ATP-dependent protease ATPase subunit HslU (439 aa).

ATP contacts are provided by residues I17, 59–64 (GVGKTE), D251, E317, and R389.

It belongs to the ClpX chaperone family. HslU subfamily. A double ring-shaped homohexamer of HslV is capped on each side by a ring-shaped HslU homohexamer. The assembly of the HslU/HslV complex is dependent on binding of ATP.

It is found in the cytoplasm. ATPase subunit of a proteasome-like degradation complex; this subunit has chaperone activity. The binding of ATP and its subsequent hydrolysis by HslU are essential for unfolding of protein substrates subsequently hydrolyzed by HslV. HslU recognizes the N-terminal part of its protein substrates and unfolds these before they are guided to HslV for hydrolysis. The protein is ATP-dependent protease ATPase subunit HslU of Campylobacter jejuni subsp. doylei (strain ATCC BAA-1458 / RM4099 / 269.97).